The chain runs to 461 residues: tRNA (guanine(10)-N(2))-methyltransferase TRMT11 (461 aa).

This sequence belongs to the class I-like SAM-binding methyltransferase superfamily. TRM11 methyltransferase family. In terms of assembly, part of the heterodimeric TRMT11-TRM112 methyltransferase complex; this complex forms an active tRNA methyltransferase, where TRMT112 acts as an activator of the catalytic subunit TRMT11.

It is found in the cytoplasm. It catalyses the reaction guanosine(10) in tRNA + S-adenosyl-L-methionine = N(2)-methylguanosine(10) in tRNA + S-adenosyl-L-homocysteine + H(+). Catalytic subunit of the TRMT11-TRM112 methyltransferase complex, that specifically mediates the S-adenosyl-L-methionine-dependent N(2)-methylation of guanosine nucleotide at position 10 (m2G10) in tRNAs. This is one of the major tRNA (guanine-N(2))-methyltransferases. This Gallus gallus (Chicken) protein is tRNA (guanine(10)-N(2))-methyltransferase TRMT11.